The chain runs to 517 residues: DNA-binding protein (517 aa).

Residues 1–10 (MASRGGNQSS) are compositionally biased toward polar residues. The segment at 1–110 (MASRGGNQSS…DISQDSEEER (110 aa)) is disordered. Low complexity predominate over residues 64 to 80 (VLVSETSRSSLSPERSN). Over residues 87 to 96 (PKKKPRKTKH) the composition is skewed to basic residues. The residue at position 180 (tyrosine 180) is a Phosphotyrosine; by host. Zn(2+) contacts are provided by cysteine 269 and histidine 271. The interval 282–316 (IEMDVASENGQRAMKENPDRAKITQNRWGRNVVQL) is flexible loop. Positions 324, 340, 382, 384, 436, and 453 each coordinate Zn(2+). Positions 501 to 517 (VSLPAGHYDSRQNPFDF) are C-terminal arm, DBP binding.

It belongs to the adenoviridae E2A DNA-binding protein family. As to quaternary structure, homomultimerizes on viral ssDNA bound to pTP. Forms a initiation complex with viral polymerase, pTP and hosts NFIA and POU2F1/OCT1. Interacts with host SRCAP.

The protein localises to the host nucleus. Plays a role in the elongation phase of viral strand displacement replication by unwinding the template in an ATP-independent fashion, employing its capacity to form multimers. Also enhances the rate of initiation. Released from template upon second strand synthesis. Assembles in complex with viral pTP, viral pol, host NFIA and host POU2F1/OCT1 on viral origin of replication. Covers the whole ssDNA genome during synthesis. The complementary strand synthesis induces its relese from DNA template. May inhibit cellular transcription mediated by the interaction between host SRCAP and CBP. The chain is DNA-binding protein from Human adenovirus B serotype 7 (HAdV-7).